Reading from the N-terminus, the 637-residue chain is tRNA 5-methylaminomethyl-2-thiouridine biosynthesis bifunctional protein MnmC (637 aa).

Residues 1-20 are disordered; sequence MSERIEWLEDGTAGGSPYSP. A tRNA (mnm(5)s(2)U34)-methyltransferase region spans residues 1 to 232; sequence MSERIEWLED…KRDNLQGEYQ (232 aa). Positions 255–637 are FAD-dependent cmnm(5)s(2)U34 oxidoreductase; it reads IGAGLAGSAV…YATRLQPSGS (383 aa).

The protein in the N-terminal section; belongs to the methyltransferase superfamily. tRNA (mnm(5)s(2)U34)-methyltransferase family. In the C-terminal section; belongs to the DAO family. FAD is required as a cofactor.

It localises to the cytoplasm. The enzyme catalyses 5-aminomethyl-2-thiouridine(34) in tRNA + S-adenosyl-L-methionine = 5-methylaminomethyl-2-thiouridine(34) in tRNA + S-adenosyl-L-homocysteine + H(+). Its function is as follows. Catalyzes the last two steps in the biosynthesis of 5-methylaminomethyl-2-thiouridine (mnm(5)s(2)U) at the wobble position (U34) in tRNA. Catalyzes the FAD-dependent demodification of cmnm(5)s(2)U34 to nm(5)s(2)U34, followed by the transfer of a methyl group from S-adenosyl-L-methionine to nm(5)s(2)U34, to form mnm(5)s(2)U34. In Polaromonas naphthalenivorans (strain CJ2), this protein is tRNA 5-methylaminomethyl-2-thiouridine biosynthesis bifunctional protein MnmC.